The primary structure comprises 485 residues: Glutamate mutase epsilon subunit (485 aa).

Arginine 66 is a binding site for L-glutamate. An adenosylcob(III)alamin-binding site is contributed by glycine 68. Arginine 100 provides a ligand contact to L-glutamate. Asparagine 123 contacts adenosylcob(III)alamin. L-glutamate contacts are provided by residues 149 to 150 (RH), glutamate 171, and tyrosine 177. Residue proline 180 participates in adenosylcob(III)alamin binding. Tyrosine 181 provides a ligand contact to L-glutamate. Positions 297, 326, 330, and 334 each coordinate adenosylcob(III)alamin.

This sequence belongs to the methylaspartate mutase GlmE subunit family. In terms of assembly, heterotetramer composed of 2 epsilon subunits (GlmE) and 2 sigma subunits (GlmS). GlmE exists as a homodimer and GlmS as a monomer. Adenosylcob(III)alamin serves as cofactor.

The enzyme catalyses (2S,3S)-3-methyl-L-aspartate = L-glutamate. Its pathway is amino-acid degradation; L-glutamate degradation via mesaconate pathway; acetate and pyruvate from L-glutamate: step 1/4. Catalyzes the carbon skeleton rearrangement of L-glutamate to L-threo-3-methylaspartate ((2S,3S)-3-methylaspartate). The chain is Glutamate mutase epsilon subunit from Treponema denticola (strain ATCC 35405 / DSM 14222 / CIP 103919 / JCM 8153 / KCTC 15104).